The primary structure comprises 72 residues: Protein SlyX (72 aa).

The segment at 53–72 (KSSQSSMLARPEDETPPPHY) is disordered.

The protein belongs to the SlyX family.

This is Protein SlyX from Proteus mirabilis (strain HI4320).